Consider the following 181-residue polypeptide: MRQRGFTLLEIMLVVLLAGVAATLVMMAIPAPKQQDSGWQIARFKAQLQYAVEDSQMNDHILGIYIQPHRWQYALLQRQVVENSPEEQQRLRYVWIPWQPYRMSVPSELPDSFHIELSTQVGAAGDGTGFSPGNGDPHVLILPGGEVTPFRLTLRNGNDSAWLQVDTNGQVHTSPEAEQKG.

A propeptide spans 1–5 (MRQRG) (leader sequence). Position 6 is an N-methylphenylalanine (F6). A helical transmembrane segment spans residues 6-29 (FTLLEIMLVVLLAGVAATLVMMAI).

This sequence belongs to the GSP H family. Type II secretion is composed of four main components: the outer membrane complex, the inner membrane complex, the cytoplasmic secretion ATPase and the periplasm-spanning pseudopilus. Interacts with core component OutG. Post-translationally, cleaved by prepilin peptidase. In terms of processing, methylated by prepilin peptidase at the amino group of the N-terminal phenylalanine once the leader sequence is cleaved by prepilin peptidase.

Its subcellular location is the cell inner membrane. Its function is as follows. Component of the type II secretion system required for the energy-dependent secretion of extracellular factors such as proteases and toxins from the periplasm. Part of the pseudopilus tip complex that is critical for the recognition and binding of secretion substrates. This is Type II secretion system protein H (outH) from Dickeya chrysanthemi (Pectobacterium chrysanthemi).